The following is a 342-amino-acid chain: Phosphate acyltransferase (342 aa).

It belongs to the PlsX family. Homodimer. Probably interacts with PlsY.

The protein localises to the cytoplasm. The catalysed reaction is a fatty acyl-[ACP] + phosphate = an acyl phosphate + holo-[ACP]. Its pathway is lipid metabolism; phospholipid metabolism. In terms of biological role, catalyzes the reversible formation of acyl-phosphate (acyl-PO(4)) from acyl-[acyl-carrier-protein] (acyl-ACP). This enzyme utilizes acyl-ACP as fatty acyl donor, but not acyl-CoA. In Shewanella halifaxensis (strain HAW-EB4), this protein is Phosphate acyltransferase.